A 476-amino-acid chain; its full sequence is MKTKITLSGFAGTGKSTVGKRIQEQLNFEFVSVGNYSRQYAMEKYGLTINEFQEQCKAQPELDNEIDEKFRLECNSKENLVIDYRLGFHFIKNAFHVLLKVSDESASKRIRLANRSDEVTSTKAIQQRNQKMRDRFQDNYGVDFTNDKNYDLVIDTDDLTANEVADLIIEHYQKSNAVSKIPSVNFHLWQPCNMRCKFCFATFLDVKQEYVPKGHLPEDEALEVVRKIAAAGFEKITFAGGEPLLCKWLPKLIKTAKQLGMTTMIVTNGSKLTDSFLKENKAYLDWIAVSIDSLDEENNIKIGRAITGKKPLSKAFYYDLIDKIHQYGYGLKINTVVNKVNYKDNLASFIAKAKPKRWKVLQVLPIKGQNDNKIDAFKITDEEYANFLDTHKDVETIVPESNDEIKGSYVMVDPAGRFFDNAAGTHNYSKPILEVGIQEALKTMNYDLDKFLNRGGVYNWNTNKNQDLRKEEVSYE.

Positions 1 to 168 (MKTKITLSGF…LTANEVADLI (168 aa)) are cytidylate kinase-like domain. Residue 9 to 17 (GFAGTGKST) participates in ATP binding. The region spanning 176–400 (NAVSKIPSVN…HKDVETIVPE (225 aa)) is the Radical SAM core domain. Positions 183–476 (SVNFHLWQPC…DLRKEEVSYE (294 aa)) are prokaryotic viperin domain. Residues cysteine 192, cysteine 196, and cysteine 199 each contribute to the [4Fe-4S] cluster site.

The protein in the N-terminal section; belongs to the cytidylate kinase-like family. This sequence in the C-terminal section; belongs to the radical SAM superfamily. Viperin family. [4Fe-4S] cluster serves as cofactor.

The enzyme catalyses GTP + AH2 + S-adenosyl-L-methionine = 3'-deoxy-3',4'-didehydro-GTP + 5'-deoxyadenosine + L-methionine + A + H2O + H(+). Functionally, expression of pVip60 in E.coli (strain MG1655) confers resistance to phage T7; prevents culture collapse upon infection. Catalyzes the conversion of guanosine triphosphate (GTP) to 3'-deoxy-3',4'-didehydro-GTP (ddhGTP), probably via a SAM-dependent radical mechanism. The modified nucleotide represses transcription from T7 RNA polymerase-directed genes (possibly by acting as chain terminators), strongly suggesting these nucleotides block viral polymerase transcription. In terms of biological role, the N-terminus of the protein may generate NTP for use by the viperin domain. This is S-adenosylmethionine-dependent nucleotide dehydratase from Lacinutrix mariniflava (strain JCM 13824 / KCCM 42306 / AKS432).